Here is a 635-residue protein sequence, read N- to C-terminus: MSKVIGIDLGTTNSCVAIMEGGEPIVIANAEGSRTTPSMVAITDSGERLVGQQAKRQAVTNPENTLFAIKRLIGRKFDSEAVKKDIAISPFKIVKADNGDAWVEVRGQKYSAPEISAMVLQKMKKTAEDYLGETVTDAVITVPAYFDDSQRQATKDAGKIAGLNVLRIINEPTAAALAYGLDKKKDEKIAVFDLGGGTFDISILELGEGVFEVKSTNGDTFLGGEDFDQDIIDWIAAEFKKDQGIDLRGDKMALQRLKEAAEKAKCELSTSLETDINLPFITADATGPKHLNLKLTRAKLEAICANLIAKLEGPCRTALKDAGLSPNDIDEVILVGGMTRMPIVQKKVQDIFGKVPNRSVNPDEVVAIGAAIQGGVLRGDVKDVLLLDVTPLSLGIETLGGVMTRLIEKNATIPCRKSQIFSTAADNQPAVSIHVLQGEREMSTDNKTLGNFELSGIPPAPRGVPQIEVTFDIDANGIVHVSAKDLGTGKEQSIRITASSGLSKEEIDKMVKDAEAHSSEDKKKRELIEARNQADSLAYSTEKSLKEFGDKIDAAEKQKIEDGLAALKKAMEGSDADAIKKASDELMQASHKLAEAVYAKAQPGEEQAGGAPHEGEAKDEKVVDADFEEVKEDKK.

Threonine 198 carries the phosphothreonine; by autocatalysis modification. The disordered stretch occupies residues tyrosine 598–lysine 635. Basic and acidic residues predominate over residues histidine 613–aspartate 624. The segment covering alanine 625–lysine 635 has biased composition (acidic residues).

Belongs to the heat shock protein 70 family.

Its function is as follows. Acts as a chaperone. This chain is Chaperone protein DnaK, found in Geotalea uraniireducens (strain Rf4) (Geobacter uraniireducens).